The sequence spans 151 residues: uncharacterized protein (151 aa).

It to M.jannaschii MJ1244 and MJ1245.

This is an uncharacterized protein from Methanothermobacter thermautotrophicus (strain ATCC 29096 / DSM 1053 / JCM 10044 / NBRC 100330 / Delta H) (Methanobacterium thermoautotrophicum).